Consider the following 439-residue polypeptide: uncharacterized protein (439 aa).

The signal sequence occupies residues 1-19; the sequence is MKKLLLTASIICLASAGLA.

This is an uncharacterized protein from Rickettsia felis (strain ATCC VR-1525 / URRWXCal2) (Rickettsia azadi).